The following is a 263-amino-acid chain: Small ribosomal subunit protein uS2 (263 aa).

A disordered region spans residues 223-246 (KSLLEQDSDANADEAEVSQEEKDA). Residues 228-240 (QDSDANADEAEVS) show a composition bias toward acidic residues.

The protein belongs to the universal ribosomal protein uS2 family.

In Campylobacter curvus (strain 525.92), this protein is Small ribosomal subunit protein uS2.